The primary structure comprises 283 residues: Pantothenate synthetase (283 aa).

30 to 37 contributes to the ATP binding site; the sequence is MGNLHQGH. His-37 (proton donor) is an active-site residue. (R)-pantoate is bound at residue Gln-61. A beta-alanine-binding site is contributed by Gln-61. 149–152 lines the ATP pocket; that stretch reads GEKD. Gln-155 is a binding site for (R)-pantoate. ATP-binding positions include Val-178 and 186 to 189; that span reads FSSR.

The protein belongs to the pantothenate synthetase family. Homodimer.

The protein resides in the cytoplasm. The enzyme catalyses (R)-pantoate + beta-alanine + ATP = (R)-pantothenate + AMP + diphosphate + H(+). It functions in the pathway cofactor biosynthesis; (R)-pantothenate biosynthesis; (R)-pantothenate from (R)-pantoate and beta-alanine: step 1/1. Functionally, catalyzes the condensation of pantoate with beta-alanine in an ATP-dependent reaction via a pantoyl-adenylate intermediate. This is Pantothenate synthetase from Proteus mirabilis (strain HI4320).